We begin with the raw amino-acid sequence, 361 residues long: Endo-1,4-beta-xylanase 2 (361 aa).

The signal sequence occupies residues 1–26; that stretch reads MHFSTITAALALLGLGAATPTDYSTS. The 309-residue stretch at 46-354 folds into the GH10 domain; that stretch reads IGTALTIRDD…KPAYSSVLKT (309 aa). Asparagine 88 and asparagine 130 each carry an N-linked (GlcNAc...) asparagine glycan. The active-site Proton donor is the glutamate 160. Glutamate 276 serves as the catalytic Nucleophile. Cysteine 304 and cysteine 310 are joined by a disulfide.

The protein belongs to the glycosyl hydrolase 10 (cellulase F) family.

It localises to the secreted. The catalysed reaction is Endohydrolysis of (1-&gt;4)-beta-D-xylosidic linkages in xylans.. It participates in glycan degradation; xylan degradation. Its function is as follows. Endo-1,4-beta-xylanase involved in the hydrolysis of xylan, a major structural heterogeneous polysaccharide found in plant biomass representing the second most abundant polysaccharide in the biosphere, after cellulose. Hydrolyzes birch-wood xylan, with a similar activity toward oat-spelt xylan. Also shows weak activities toward pNP-beta-D-cellobioside and pNP-beta-D-xylopyranoside, but no detectable activity toward carboxymethyl cellulose and pNP-beta-L-arabinofuranoside.-. This is Endo-1,4-beta-xylanase 2 (xynII) from Aureobasidium pullulans (Black yeast).